The sequence spans 29 residues: Varv peptide F (29 aa).

The segment at residues 1 to 29 (GVPICGETCTLGTCYTAGCSCSWPVCTRN) is a cross-link (cyclopeptide (Gly-Asn)). Cystine bridges form between Cys5–Cys19, Cys9–Cys21, and Cys14–Cys26.

This is a cyclic peptide.

Probably participates in a plant defense mechanism. Has cytotoxic activity against a variety of drug-resistant and drug-sensitive human tumor cell lines. The protein is Varv peptide F of Viola arvensis (European field pansy).